The primary structure comprises 274 residues: 2,3,4,5-tetrahydropyridine-2,6-dicarboxylate N-succinyltransferase (274 aa).

Belongs to the transferase hexapeptide repeat family.

It localises to the cytoplasm. It catalyses the reaction (S)-2,3,4,5-tetrahydrodipicolinate + succinyl-CoA + H2O = (S)-2-succinylamino-6-oxoheptanedioate + CoA. Its pathway is amino-acid biosynthesis; L-lysine biosynthesis via DAP pathway; LL-2,6-diaminopimelate from (S)-tetrahydrodipicolinate (succinylase route): step 1/3. This is 2,3,4,5-tetrahydropyridine-2,6-dicarboxylate N-succinyltransferase from Delftia acidovorans (strain DSM 14801 / SPH-1).